The primary structure comprises 523 residues: Melanoma-associated antigen E2 (523 aa).

MAGE domains are found at residues 88–288 (LEDR…YNKA) and 311–502 (MNDK…YREA).

This chain is Melanoma-associated antigen E2 (MAGEE2), found in Homo sapiens (Human).